A 493-amino-acid chain; its full sequence is Cytochrome P450 2E1 (493 aa).

298 to 303 lines the substrate pocket; the sequence is FAGTET. Cys437 is a heme binding site.

The protein belongs to the cytochrome P450 family. In terms of assembly, interacts with chaperones HSP70 and HSP90; this interaction is required for initial targeting to mitochondria. It depends on heme as a cofactor.

It localises to the endoplasmic reticulum membrane. The protein resides in the microsome membrane. It is found in the mitochondrion inner membrane. The catalysed reaction is an organic molecule + reduced [NADPH--hemoprotein reductase] + O2 = an alcohol + oxidized [NADPH--hemoprotein reductase] + H2O + H(+). The enzyme catalyses (5Z,8Z,11Z)-eicosatrienoate + reduced [NADPH--hemoprotein reductase] + O2 = 19-hydroxy-(5Z,8Z,11Z)-eicosatrienoate + oxidized [NADPH--hemoprotein reductase] + H2O + H(+). It carries out the reaction (5Z,8Z,11Z,14Z,17Z)-eicosapentaenoate + reduced [NADPH--hemoprotein reductase] + O2 = 19-hydroxy-(5Z,8Z,11Z,14Z,17Z)-eicosapentaenoate + oxidized [NADPH--hemoprotein reductase] + H2O + H(+). It catalyses the reaction (4Z,7Z,10Z,13Z,16Z,19Z)-docosahexaenoate + reduced [NADPH--hemoprotein reductase] + O2 = 21-hydroxy-(4Z,7Z,10Z,13Z,16Z,19Z)-docosahexaenoate + oxidized [NADPH--hemoprotein reductase] + H2O + H(+). The catalysed reaction is dodecanoate + reduced [NADPH--hemoprotein reductase] + O2 = 11-hydroxydodecanoate + oxidized [NADPH--hemoprotein reductase] + H2O + H(+). The enzyme catalyses tetradecanoate + reduced [NADPH--hemoprotein reductase] + O2 = 13-hydroxytetradecanoate + oxidized [NADPH--hemoprotein reductase] + H2O + H(+). It carries out the reaction 4-nitrophenol + NADPH + O2 + H(+) = 4-nitrocatechol + NADP(+) + H2O. The protein operates within lipid metabolism; fatty acid metabolism. With respect to regulation, the omega-1 hydroxylase activity is stimulated by cytochrome b5. Its function is as follows. A cytochrome P450 monooxygenase involved in the metabolism of fatty acids. Mechanistically, uses molecular oxygen inserting one oxygen atom into a substrate, and reducing the second into a water molecule, with two electrons provided by NADPH via cytochrome P450 reductase (NADPH--hemoprotein reductase). Catalyzes the hydroxylation of carbon-hydrogen bonds. Hydroxylates fatty acids specifically at the omega-1 position displaying the highest catalytic activity for saturated fatty acids. May be involved in the oxidative metabolism of xenobiotics. This Oryctolagus cuniculus (Rabbit) protein is Cytochrome P450 2E1 (CYP2E1).